The chain runs to 307 residues: UDP-N-acetylenolpyruvoylglucosamine reductase (307 aa).

Residues 34–199 (RVGGPAQVLF…TAVRFRGTPS (166 aa)) form the FAD-binding PCMH-type domain. Residue Arg-179 is part of the active site. Catalysis depends on Ser-228, which acts as the Proton donor. Glu-298 is an active-site residue.

This sequence belongs to the MurB family. The cofactor is FAD.

The protein localises to the cytoplasm. It carries out the reaction UDP-N-acetyl-alpha-D-muramate + NADP(+) = UDP-N-acetyl-3-O-(1-carboxyvinyl)-alpha-D-glucosamine + NADPH + H(+). It functions in the pathway cell wall biogenesis; peptidoglycan biosynthesis. In terms of biological role, cell wall formation. This chain is UDP-N-acetylenolpyruvoylglucosamine reductase, found in Bradyrhizobium sp. (strain ORS 278).